Consider the following 513-residue polypeptide: Probable DNA ligase (513 aa).

E215 lines the ATP pocket. Catalysis depends on K217, which acts as the N6-AMP-lysine intermediate. The ATP site is built by R222, R237, E266, F306, R378, and K384.

The protein belongs to the ATP-dependent DNA ligase family. Requires Mg(2+) as cofactor.

It catalyses the reaction ATP + (deoxyribonucleotide)n-3'-hydroxyl + 5'-phospho-(deoxyribonucleotide)m = (deoxyribonucleotide)n+m + AMP + diphosphate.. In terms of biological role, DNA ligase that seals nicks in double-stranded DNA during DNA replication, DNA recombination and DNA repair. This is Probable DNA ligase from Mycobacterium marinum (strain ATCC BAA-535 / M).